The primary structure comprises 363 residues: tRNA/tmRNA (uracil-C(5))-methyltransferase (363 aa).

S-adenosyl-L-methionine is bound by residues Q187, Y215, N220, E236, and D296. The Nucleophile role is filled by C321. The active-site Proton acceptor is E355.

It belongs to the class I-like SAM-binding methyltransferase superfamily. RNA M5U methyltransferase family. TrmA subfamily.

It catalyses the reaction uridine(54) in tRNA + S-adenosyl-L-methionine = 5-methyluridine(54) in tRNA + S-adenosyl-L-homocysteine + H(+). The catalysed reaction is uridine(341) in tmRNA + S-adenosyl-L-methionine = 5-methyluridine(341) in tmRNA + S-adenosyl-L-homocysteine + H(+). In terms of biological role, dual-specificity methyltransferase that catalyzes the formation of 5-methyluridine at position 54 (m5U54) in all tRNAs, and that of position 341 (m5U341) in tmRNA (transfer-mRNA). The polypeptide is tRNA/tmRNA (uracil-C(5))-methyltransferase (Pseudomonas aeruginosa (strain UCBPP-PA14)).